The chain runs to 316 residues: Thymidylate synthase (316 aa).

Residues Arg23 and 178-179 contribute to the dUMP site; that span reads RR. Cys198 (nucleophile) is an active-site residue. DUMP is bound by residues 218–221, Asn229, and 259–261; these read RSAD and HIY. Asp221 provides a ligand contact to (6R)-5,10-methylene-5,6,7,8-tetrahydrofolate. (6R)-5,10-methylene-5,6,7,8-tetrahydrofolate is bound at residue Ala315.

It belongs to the thymidylate synthase family. Bacterial-type ThyA subfamily. As to quaternary structure, homodimer.

It localises to the cytoplasm. It catalyses the reaction dUMP + (6R)-5,10-methylene-5,6,7,8-tetrahydrofolate = 7,8-dihydrofolate + dTMP. Its pathway is pyrimidine metabolism; dTTP biosynthesis. Catalyzes the reductive methylation of 2'-deoxyuridine-5'-monophosphate (dUMP) to 2'-deoxythymidine-5'-monophosphate (dTMP) while utilizing 5,10-methylenetetrahydrofolate (mTHF) as the methyl donor and reductant in the reaction, yielding dihydrofolate (DHF) as a by-product. This enzymatic reaction provides an intracellular de novo source of dTMP, an essential precursor for DNA biosynthesis. The chain is Thymidylate synthase from Levilactobacillus brevis (strain ATCC 367 / BCRC 12310 / CIP 105137 / JCM 1170 / LMG 11437 / NCIMB 947 / NCTC 947) (Lactobacillus brevis).